The sequence spans 358 residues: 3-isopropylmalate dehydrogenase (358 aa).

Residue G77–E90 coordinates NAD(+). Positions 98, 108, 137, and 226 each coordinate substrate. Residues D226, D250, and D254 each contribute to the Mg(2+) site. An NAD(+)-binding site is contributed by G284–N296.

Belongs to the isocitrate and isopropylmalate dehydrogenases family. LeuB type 1 subfamily. In terms of assembly, homodimer. Requires Mg(2+) as cofactor. Mn(2+) is required as a cofactor.

The protein localises to the cytoplasm. It carries out the reaction (2R,3S)-3-isopropylmalate + NAD(+) = 4-methyl-2-oxopentanoate + CO2 + NADH. Its pathway is amino-acid biosynthesis; L-leucine biosynthesis; L-leucine from 3-methyl-2-oxobutanoate: step 3/4. In terms of biological role, catalyzes the oxidation of 3-carboxy-2-hydroxy-4-methylpentanoate (3-isopropylmalate) to 3-carboxy-4-methyl-2-oxopentanoate. The product decarboxylates to 4-methyl-2 oxopentanoate. In Haemophilus influenzae (strain 86-028NP), this protein is 3-isopropylmalate dehydrogenase.